The chain runs to 704 residues: Matrix metalloproteinase-9 (704 aa).

The N-terminal stretch at Met1–Ala19 is a signal peptide. The propeptide at Ala20 to Lys106 is activation peptide. Asn38 carries an N-linked (GlcNAc...) asparagine glycan. Residues Pro97–Leu104 carry the Cysteine switch motif. Residue Cys99 coordinates Zn(2+). Residue Asn127 is glycosylated (N-linked (GlcNAc...) asparagine). Ca(2+) contacts are provided by Asp131 and Asp165. His175 and Asp177 together coordinate Zn(2+). Ca(2+) contacts are provided by Asp182, Gly183, Asn185, and Leu187. Residue His190 coordinates Zn(2+). 3 residues coordinate Ca(2+): Gly197, Gln199, and Asp201. His203 contributes to the Zn(2+) binding site. Residues Asp205, Asp206, and Glu208 each contribute to the Ca(2+) site. 3 Fibronectin type-II domains span residues Ala225–Ser273, Gly283–Thr331, and Ser342–Asp390. 6 disulfides stabilise this stretch: Cys230–Cys256, Cys244–Cys271, Cys288–Cys314, Cys302–Cys329, Cys347–Cys373, and Cys361–Cys388. His401 serves as a coordination point for Zn(2+). The active site involves Glu402. Positions 405 and 411 each coordinate Zn(2+). Residues Asp434–Asp507 form a disordered region. Composition is skewed to pro residues over residues Glu450–Pro461 and Thr483–Ala496. Cys513 and Cys701 are oxidised to a cystine. Hemopexin repeat units follow at residues Val515 to Leu560, Pro561 to Pro605, Val607 to Val654, and Pro655 to Cys701.

This sequence belongs to the peptidase M10A family. In terms of assembly, exists as monomer or homodimer; disulfide-linked. Also exists as heterodimer with LCN2. Macrophages and transformed cell lines produce only the monomeric form. Interacts with ECM1. Zn(2+) serves as cofactor. Ca(2+) is required as a cofactor. Post-translationally, N- and O-glycosylated.

It is found in the secreted. The protein resides in the extracellular space. Its subcellular location is the extracellular matrix. The enzyme catalyses Cleavage of gelatin types I and V and collagen types IV and V.. Its function is as follows. Matrix metalloproteinase that plays an essential role in local proteolysis of the extracellular matrix and in leukocyte migration. Could play a role in bone osteoclastic resorption. Cleaves KiSS1 at a Gly-|-Leu bond. Cleaves NINJ1 to generate the Secreted ninjurin-1 form. Cleaves type IV and type V collagen into large C-terminal three quarter fragments and shorter N-terminal one quarter fragments. Degrades fibronectin but not laminin or Pz-peptide. The sequence is that of Matrix metalloproteinase-9 (MMP9) from Canis lupus familiaris (Dog).